A 161-amino-acid polypeptide reads, in one-letter code: Calmodulin-like protein (161 aa).

EF-hand domains lie at 21–56 (EEIDEFREAFMMFDKDGNGTISTKELGIAMRSLGQN), 57–92 (PTEQEILEMINEVDIDGNGQIEFPEFCVMMKRMMKE), 93–128 (TDSEMIREAFRVFDKDGNGVITAQEFRYFMVHMGMQ), and 129–161 (FSEEEVDEMIKEVDVDGDGEIDYEEFVKMMSNQ). Residues Asp-34, Asp-36, Asn-38, Thr-40, Glu-45, Asp-70, Asp-72, Asn-74, Gln-76, Glu-81, Asp-106, Asp-108, Asn-110, Glu-117, Asp-142, Asp-144, Asp-146, Glu-148, and Glu-153 each contribute to the Ca(2+) site.

Belongs to the calmodulin family.

In terms of biological role, this protein resembles calmodulin in sequence but possibly resembles troponin C in function. The chain is Calmodulin-like protein (cal-1) from Caenorhabditis elegans.